The primary structure comprises 143 residues: FAD synthase (143 aa).

ATP contacts are provided by residues 10–11, 15–18, and aspartate 93; these read TF and HPGH.

Belongs to the archaeal FAD synthase family. Homodimer. It depends on a divalent metal cation as a cofactor.

It catalyses the reaction FMN + ATP + H(+) = FAD + diphosphate. Its pathway is cofactor biosynthesis; FAD biosynthesis; FAD from FMN: step 1/1. Catalyzes the transfer of the AMP portion of ATP to flavin mononucleotide (FMN) to produce flavin adenine dinucleotide (FAD) coenzyme. In Haloterrigena turkmenica (strain ATCC 51198 / DSM 5511 / JCM 9101 / NCIMB 13204 / VKM B-1734 / 4k) (Halococcus turkmenicus), this protein is FAD synthase.